We begin with the raw amino-acid sequence, 116 residues long: MKMKLLGIILLVSFPFVLGFAGIPIEEGENSVEVGEVERSCINVGDFCDGKKDDCQCCRDNAFCSCSVIFGYKTNCRCEVGTTATSYGICMAKHKCGRQTTCTKPCLSKRCKKNHG.

The signal sequence occupies residues 1 to 19 (MKMKLLGIILLVSFPFVLG). A propeptide spanning residues 20–38 (FAGIPIEEGENSVEVGEVE) is cleaved from the precursor. 7 cysteine pairs are disulfide-bonded: Cys41–Cys58, Cys48–Cys64, Cys55–Cys90, Cys57–Cys78, Cys66–Cys76, Cys96–Cys102, and Cys106–Cys111. His115 carries the post-translational modification Histidine amide.

Belongs to the neurotoxin 04 (omega-agtx) family. 03 (type II/III omega-agtx) subfamily. As to expression, expressed by the venom gland.

It is found in the secreted. In terms of biological role, this toxin is a potent and practically irreversible antagonist of both Cav2.1/CACNA1A and Cav2.2/CACNA1B calcium channels, while it displays a partial and rapidly reversible block of Cav2.3/CACNA1E calcium channels and no effect on Cav3/CACNA1 calcium channels. Inhibits glutamate uptake from rat brain synaptosomes by an interaction between cysteines from both glutamate transporter and toxin. Blocks potassium-induced exocytosis of synaptic vesicles in brain cortical synaptosomes (IC(50)=1.1 nM). In rat brain, inhibits glutamate release, neuronal death and loss of neurotransmission in the hippocampus resulting from ischemia. In vivo, induces rapid general flaccid paralysis followed by death in 10-30 minutes at dose levels of 5 ug per mouse. In Phoneutria nigriventer (Brazilian armed spider), this protein is Omega-ctenitoxin-Pn3a.